A 336-amino-acid polypeptide reads, in one-letter code: Ethanol acetyltransferase 1 (336 aa).

The transit peptide at 1–14 (MFPTRVLRSTLQKL) directs the protein to the mitochondrion. One can recognise an AB hydrolase-1 domain in the interval 44–296 (PIVFLHGIFG…VNSSHDILDQ (253 aa)). Residues Ser117, Asp141, and His291 each act as charge relay system in the active site.

It belongs to the AB hydrolase superfamily.

It is found in the mitochondrion. The catalysed reaction is ethanol + acetyl-CoA = ethyl acetate + CoA. The enzyme catalyses acetyl-CoA + H2O = acetate + CoA + H(+). It catalyses the reaction ethyl acetate + H2O = ethanol + acetate + H(+). Alcohol acetyltransferase that catalyzes the synthesis of ethyl acetate from ethanol and acetyl-CoA. Can also function as a thioesterase by hydrolyzing acetyl-CoA in the absence of ethanol, as well as esterase hydrolyzing ethyl acetate. The protein is Ethanol acetyltransferase 1 (EAT1) of Cyberlindnera jadinii (strain ATCC 18201 / CBS 1600 / BCRC 20928 / JCM 3617 / NBRC 0987 / NRRL Y-1542) (Torula yeast).